Here is a 96-residue protein sequence, read N- to C-terminus: MNNETKFTPKDLDEELVKAKMLERMHDVIETAISKGFSAREALEIMTREIHLIRDEVLLHNKKAHNNIVCRELGVDDSAVIPQRQYLCALMRGSRH.

It belongs to the mulikevirus gp14 protein family.

The protein localises to the host cytoplasm. This is an uncharacterized protein from Escherichia coli (Bacteriophage D108).